We begin with the raw amino-acid sequence, 51 residues long: Insulin (51 aa).

Disulfide bonds link cysteine 7–cysteine 37, cysteine 19–cysteine 50, and cysteine 36–cysteine 41.

This sequence belongs to the insulin family. In terms of assembly, heterodimer of a B chain and an A chain linked by two disulfide bonds.

It localises to the secreted. In terms of biological role, insulin decreases blood glucose concentration. It increases cell permeability to monosaccharides, amino acids and fatty acids. It accelerates glycolysis, the pentose phosphate cycle, and glycogen synthesis in liver. This Didelphis virginiana (North American opossum) protein is Insulin (INS).